The sequence spans 395 residues: uncharacterized protein (395 aa).

This is an uncharacterized protein from Methanocaldococcus jannaschii (strain ATCC 43067 / DSM 2661 / JAL-1 / JCM 10045 / NBRC 100440) (Methanococcus jannaschii).